Here is a 258-residue protein sequence, read N- to C-terminus: Imidazole glycerol phosphate synthase subunit HisF (258 aa).

Active-site residues include Asp12 and Asp131.

Belongs to the HisA/HisF family. As to quaternary structure, heterodimer of HisH and HisF.

The protein localises to the cytoplasm. The catalysed reaction is 5-[(5-phospho-1-deoxy-D-ribulos-1-ylimino)methylamino]-1-(5-phospho-beta-D-ribosyl)imidazole-4-carboxamide + L-glutamine = D-erythro-1-(imidazol-4-yl)glycerol 3-phosphate + 5-amino-1-(5-phospho-beta-D-ribosyl)imidazole-4-carboxamide + L-glutamate + H(+). The protein operates within amino-acid biosynthesis; L-histidine biosynthesis; L-histidine from 5-phospho-alpha-D-ribose 1-diphosphate: step 5/9. In terms of biological role, IGPS catalyzes the conversion of PRFAR and glutamine to IGP, AICAR and glutamate. The HisF subunit catalyzes the cyclization activity that produces IGP and AICAR from PRFAR using the ammonia provided by the HisH subunit. The protein is Imidazole glycerol phosphate synthase subunit HisF of Corynebacterium diphtheriae (strain ATCC 700971 / NCTC 13129 / Biotype gravis).